The primary structure comprises 271 residues: Glutamate racemase 3 (271 aa).

Substrate contacts are provided by residues 15 to 16 (DS) and 47 to 48 (YG). Cys-78 serves as the catalytic Proton donor/acceptor. Residue 79-80 (NT) participates in substrate binding. Cys-185 (proton donor/acceptor) is an active-site residue. A substrate-binding site is contributed by 186 to 187 (TH).

The protein belongs to the aspartate/glutamate racemases family.

The catalysed reaction is L-glutamate = D-glutamate. It participates in cell wall biogenesis; peptidoglycan biosynthesis. Its function is as follows. Provides the (R)-glutamate required for cell wall biosynthesis. In Caldanaerobacter subterraneus subsp. tengcongensis (strain DSM 15242 / JCM 11007 / NBRC 100824 / MB4) (Thermoanaerobacter tengcongensis), this protein is Glutamate racemase 3.